The sequence spans 251 residues: Sugar fermentation stimulation protein homolog (251 aa).

This sequence belongs to the SfsA family.

The sequence is that of Sugar fermentation stimulation protein homolog from Prochlorococcus marinus (strain MIT 9313).